The chain runs to 464 residues: tRNA modification GTPase MnmE (464 aa).

The (6S)-5-formyl-5,6,7,8-tetrahydrofolate site is built by Arg27, Glu90, and Lys129. One can recognise a TrmE-type G domain in the interval 222–384; the sequence is GIALVLAGSV…LYDKIRSLTC (163 aa). Residues 232–237, 251–257, and 276–279 each bind GTP; these read NVGKSS, SSYAGTT, and DTAG. Positions 236 and 257 each coordinate Mg(2+). Lys464 is a (6S)-5-formyl-5,6,7,8-tetrahydrofolate binding site.

It belongs to the TRAFAC class TrmE-Era-EngA-EngB-Septin-like GTPase superfamily. TrmE GTPase family. In terms of assembly, homodimer. Heterotetramer of two MnmE and two MnmG subunits. It depends on K(+) as a cofactor.

The protein localises to the cytoplasm. Exhibits a very high intrinsic GTPase hydrolysis rate. Involved in the addition of a carboxymethylaminomethyl (cmnm) group at the wobble position (U34) of certain tRNAs, forming tRNA-cmnm(5)s(2)U34. The protein is tRNA modification GTPase MnmE of Borrelia turicatae (strain 91E135).